Consider the following 132-residue polypeptide: UPF0201 protein MTH_433 (132 aa).

Belongs to the UPF0201 family.

The chain is UPF0201 protein MTH_433 from Methanothermobacter thermautotrophicus (strain ATCC 29096 / DSM 1053 / JCM 10044 / NBRC 100330 / Delta H) (Methanobacterium thermoautotrophicum).